A 61-amino-acid chain; its full sequence is MDPNCSCATDGSCSCAGSCKCKECKCTTCKKSCCSCCPVGCAKCSQGCVCKEASDKCSCCA.

Position 1 is an N-acetylmethionine (M1). The interval 1–29 is beta; it reads MDPNCSCATDGSCSCAGSCKCKECKCTTC. A divalent metal cation-binding residues include C5, C7, C13, C15, C19, C21, C24, C26, C29, C33, C34, C36, C37, C41, C44, C48, C50, and C57. Positions 30–61 are alpha; sequence KKSCCSCCPVGCAKCSQGCVCKEASDKCSCCA. Position 58 is a phosphoserine (S58). Positions 59 and 60 each coordinate a divalent metal cation.

The protein belongs to the metallothionein superfamily. Type 1 family.

Its function is as follows. Metallothioneins have a high content of cysteine residues that bind various heavy metals; these proteins are transcriptionally regulated by both heavy metals and glucocorticoids. The polypeptide is Metallothionein-2 (MT2) (Cricetulus griseus (Chinese hamster)).